The chain runs to 306 residues: MNNEFINFDRISRENWKDLHQQSQALLTEKELESIKSLNDNINIQDVIDIYLPLINLIQIYKRSQENLSFSKAIFLKKENYQRPFIIGISGSVAVGKSTTSRLLQLLISRTFKDSHVELVTTDGFLYPNEKLIQNGILNRKGFPESYDMESLLNFLDTIKNGITAKIPIYSHEIYDIVPNQLQTIETPDFLILEGINVFQNQQNHRLYMNDYFDFSIYIDAENKQIEEWYLQRFNSLLQLAEADPSNYYHKFTQIPPHKAMELAKDIWKTINLVNLEKYIEPTRNRADFIIHKGKHHKIDEIYLKK.

91-98 (GSVAVGKS) is a binding site for ATP.

The protein belongs to the prokaryotic pantothenate kinase family.

Its subcellular location is the cytoplasm. It catalyses the reaction (R)-pantothenate + ATP = (R)-4'-phosphopantothenate + ADP + H(+). It functions in the pathway cofactor biosynthesis; coenzyme A biosynthesis; CoA from (R)-pantothenate: step 1/5. This is Pantothenate kinase from Streptococcus agalactiae serotype Ia (strain ATCC 27591 / A909 / CDC SS700).